Here is an 83-residue protein sequence, read N- to C-terminus: Cytochrome b559 subunit alpha (83 aa).

A helical membrane pass occupies residues 21–35 (VIHSITIPSLFIAGW). Histidine 23 provides a ligand contact to heme.

Belongs to the PsbE/PsbF family. As to quaternary structure, heterodimer of an alpha subunit and a beta subunit. PSII is composed of 1 copy each of membrane proteins PsbA, PsbB, PsbC, PsbD, PsbE, PsbF, PsbH, PsbI, PsbJ, PsbK, PsbL, PsbM, PsbT, PsbX, PsbY, PsbZ, Psb30/Ycf12, at least 3 peripheral proteins of the oxygen-evolving complex and a large number of cofactors. It forms dimeric complexes. Heme b is required as a cofactor.

It is found in the plastid. The protein resides in the chloroplast thylakoid membrane. This b-type cytochrome is tightly associated with the reaction center of photosystem II (PSII). PSII is a light-driven water:plastoquinone oxidoreductase that uses light energy to abstract electrons from H(2)O, generating O(2) and a proton gradient subsequently used for ATP formation. It consists of a core antenna complex that captures photons, and an electron transfer chain that converts photonic excitation into a charge separation. In Staurastrum punctulatum (Green alga), this protein is Cytochrome b559 subunit alpha.